The following is a 95-amino-acid chain: Co-chaperonin GroES (95 aa).

It belongs to the GroES chaperonin family. As to quaternary structure, heptamer of 7 subunits arranged in a ring. Interacts with the chaperonin GroEL.

The protein localises to the cytoplasm. Together with the chaperonin GroEL, plays an essential role in assisting protein folding. The GroEL-GroES system forms a nano-cage that allows encapsulation of the non-native substrate proteins and provides a physical environment optimized to promote and accelerate protein folding. GroES binds to the apical surface of the GroEL ring, thereby capping the opening of the GroEL channel. In Rickettsia conorii (strain ATCC VR-613 / Malish 7), this protein is Co-chaperonin GroES.